The sequence spans 290 residues: MSYNNPYQLETPFEESYELDEGSSAIGAEGHDFVGFMNKISQINRDLDKYDHTINQVDSLHKRLLTEVNEEQASHLRHSLDNFVAQATDLQFKLKNEIKSAQRDGIHDTNKQAQAENSRQRFLKLIQDYRIVDSNYKEENKEQAKRQYMIIQPEATEDEVEAAISDVGGQQIFSQALLNANRRGEAKTALAEVQARHQELLKLEKSMAELTQLFNDMEELVIEQQENVDVIDKNVEDAQLDVEQGVGHTDKAVKSARKARKNKIRCWLIVFAIIVVVVVVVVVPAVVKTR.

At 1–265 (MSYNNPYQLE…ARKARKNKIR (265 aa)) the chain is on the cytoplasmic side. Positions 190–252 (LAEVQARHQE…EQGVGHTDKA (63 aa)) constitute a t-SNARE coiled-coil homology domain. The helical; Anchor for type IV membrane protein transmembrane segment at 266–287 (CWLIVFAIIVVVVVVVVVPAVV) threads the bilayer. Over 288 to 290 (KTR) the chain is Extracellular.

It belongs to the syntaxin family.

It is found in the membrane. In terms of biological role, required for vesicle fusion with the plasma membrane. The polypeptide is Protein SSO1 (SSO1) (Saccharomyces cerevisiae (strain ATCC 204508 / S288c) (Baker's yeast)).